Here is a 406-residue protein sequence, read N- to C-terminus: Zinc metalloprotease Rip1 (406 aa).

Residues 1–21 form a helical membrane-spanning segment; that stretch reads MMFGIGIVLFALAILVSVALH. H21 contacts Zn(2+). The active site involves E22. H25 is a Zn(2+) binding site. A helical transmembrane segment spans residues 108 to 128; the sequence is PAMNFVIGLVLIYGIAIVWGL. A PDZ domain is found at 125-209; it reads VWGLPNLHQP…RIEFKRDGRV (85 aa). D206 contributes to the Zn(2+) binding site. Transmembrane regions (helical) follow at residues 327-349 and 375-395; these read NFVL…IAVA and LMPA…LTVT.

Belongs to the peptidase M50B family. Requires Zn(2+) as cofactor.

The protein localises to the cell membrane. With respect to regulation, proteolysis is inhibited by Wag31; when Wag31 is non-functional oxidative stress increases proteolysis. In terms of biological role, a probable intramembrane site-2 protease (S2P) that cleaves type-2 transmembrane proteins within their membrane-spanning domains. Degrades PbpB (PBP3, FtsI) under conditions of oxidatives stress; degradation is inhibited by Wag31-PbpB interaction. Also cleaves anti-sigma factors RskA, RslA and RslM. Site-1 proteases have not yet been identified in this organism. Functionally, regulated intramembrane proteolysis (RIP) occurs when an extracytoplasmic signal (possibly oxidative stress) triggers a concerted proteolytic cascade to transmit information and elicit cellular responses. The membrane-spanning regulatory substrate protein (includes anti-sigma factors RskA, RslA, RsmA, and PbpB) is first cut extracytoplasmically (site-1 protease, S1P), then within the membrane itself (site-2 protease, S2P, this entry), while cytoplasmic proteases finish degrading the regulatory protein, liberating the effector protein (ECF sigma factors SigK, SigL and SigM). The chain is Zinc metalloprotease Rip1 (rip1) from Mycolicibacterium smegmatis (strain ATCC 700084 / mc(2)155) (Mycobacterium smegmatis).